Consider the following 371-residue polypeptide: Peptide chain release factor 2 (371 aa).

The residue at position 250 (Q250) is an N5-methylglutamine.

Belongs to the prokaryotic/mitochondrial release factor family. In terms of processing, methylated by PrmC. Methylation increases the termination efficiency of RF2.

It localises to the cytoplasm. In terms of biological role, peptide chain release factor 2 directs the termination of translation in response to the peptide chain termination codons UGA and UAA. This Paramagnetospirillum magneticum (strain ATCC 700264 / AMB-1) (Magnetospirillum magneticum) protein is Peptide chain release factor 2.